Consider the following 78-residue polypeptide: Biotin synthase auxiliary protein (78 aa).

This sequence belongs to the BsaP family. Iron-sulfur cluster serves as cofactor.

In terms of biological role, required for the activity of the biotin synthase BioB. The sequence is that of Biotin synthase auxiliary protein from Mycolicibacterium smegmatis (strain ATCC 700084 / mc(2)155) (Mycobacterium smegmatis).